A 371-amino-acid chain; its full sequence is LIM domain-binding protein 2 (371 aa).

2 disordered regions span residues 244-289 and 325-371; these read APPA…AAAN and QYDA…QASQ. Positions 263–289 are enriched in low complexity; the sequence is STSSTSNSSAGNNANSTNSKKKSAAAN. The LIM interaction domain (LID) domain occupies 296 to 335; it reads DVMVVGEPTLMGGEFGDEDERLITRLENTQYDAANGMDDE. Polar residues predominate over residues 339-371; sequence NNSPALGNNSPWNSKPPANQETKSENPTPQASQ.

Belongs to the LDB family. First expressed at stages 15-16 in presumptive limb mesoderm. As limb outgrowth proceeds, expressed in the entire limb bud, concentrating in the distal mesoderm throughout limb development. Both hindlimbs and forelimbs exhibit similar expression patterns.

It is found in the nucleus. In terms of biological role, binds to the LIM domain of a wide variety of LIM domain-containing transcription factors. The chain is LIM domain-binding protein 2 (LDB2) from Gallus gallus (Chicken).